The chain runs to 215 residues: Adenylate kinase (215 aa).

10–15 (GAGKGT) provides a ligand contact to ATP. Positions 30-59 (STGDMLRAAIKAQTPMGKMAKEFMDAGKLV) are NMP. AMP is bound by residues T31, R36, 57 to 59 (KLV), 85 to 88 (GFPR), and Q92. The LID stretch occupies residues 122–159 (GRRVHPASGRTYHITYNPPKVDDKDNETGDDLIQREDD). Residues R123 and 132-133 (TY) contribute to the ATP site. AMP is bound by residues R156 and R167. Residue Q201 coordinates ATP.

Belongs to the adenylate kinase family. Monomer.

It localises to the cytoplasm. It carries out the reaction AMP + ATP = 2 ADP. It functions in the pathway purine metabolism; AMP biosynthesis via salvage pathway; AMP from ADP: step 1/1. Functionally, catalyzes the reversible transfer of the terminal phosphate group between ATP and AMP. Plays an important role in cellular energy homeostasis and in adenine nucleotide metabolism. The polypeptide is Adenylate kinase (Hydrogenovibrio crunogenus (strain DSM 25203 / XCL-2) (Thiomicrospira crunogena)).